A 498-amino-acid polypeptide reads, in one-letter code: Protein flp (498 aa).

4 helical membrane passes run 6–26, 389–409, 433–453, and 471–491; these read LYFL…IHIT, FNIV…FSAY, LTLC…YLIL, and LALI…LLFL.

It is found in the cell membrane. In terms of biological role, its precise function is unknown. Has no penicillin-binding activity and is not involved in methicillin resistance. This chain is Protein flp (flp), found in Staphylococcus aureus (strain MW2).